Consider the following 54-residue polypeptide: Phorbol-12-myristate-13-acetate-induced protein 1 (54 aa).

Residues 29–37 (LRRFGDKLN) carry the BH3 motif. Residues 41–50 (KLLNLISKLF) form a required for mitochondrial location region.

It belongs to the PMAIP1 family. As to quaternary structure, interacts with MCL1. Interacts with BCL2A1. Interacts with BAX. Interacts with BCL2L10. In terms of tissue distribution, highly expressed in adult T-cell leukemia cell line.

It is found in the mitochondrion. Its function is as follows. Promotes activation of caspases and apoptosis. Promotes mitochondrial membrane changes and efflux of apoptogenic proteins from the mitochondria. Contributes to p53/TP53-dependent apoptosis after radiation exposure. Promotes proteasomal degradation of MCL1. Competes with BAK1 for binding to MCL1 and can displace BAK1 from its binding site on MCL1. Competes with BIM/BCL2L11 for binding to MCL1 and can displace BIM/BCL2L11 from its binding site on MCL1. This is Phorbol-12-myristate-13-acetate-induced protein 1 (PMAIP1) from Homo sapiens (Human).